The primary structure comprises 248 residues: Anamorsin homolog (248 aa).

Residues 4–129 form an N-terminal SAM-like domain region; the sequence is FKGLQKSLYI…ETGSSARLSF (126 aa). The linker stretch occupies residues 130-161; the sequence is AKKNASAINVWKISGDDEELIDEEELLDEEDK. [2Fe-2S] cluster contacts are provided by C172, C181, C184, and C186. The fe-S binding site A stretch occupies residues 172–186; the sequence is CSTTGKRKACKNCSC. Positions 209, 212, 220, and 223 each coordinate [4Fe-4S] cluster. 2 consecutive short sequence motifs (cx2C motif) follow at residues 209-212 and 220-223; these read CGNC and CSTC. A fe-S binding site B region spans residues 209 to 223; it reads CGNCYLGDAFRCSTC.

Belongs to the anamorsin family. In terms of assembly, monomer. Requires [2Fe-2S] cluster as cofactor. The cofactor is [4Fe-4S] cluster.

It localises to the cytoplasm. The protein localises to the mitochondrion intermembrane space. In terms of biological role, component of the cytosolic iron-sulfur (Fe-S) protein assembly (CIA) machinery. Required for the maturation of extramitochondrial Fe-S proteins. Part of an electron transfer chain functioning in an early step of cytosolic Fe-S biogenesis, facilitating the de novo assembly of a [4Fe-4S] cluster on the cytosolic Fe-S scaffold complex. Electrons are transferred from NADPH via a FAD- and FMN-containing diflavin oxidoreductase. Together with the diflavin oxidoreductase, also required for the assembly of the diferric tyrosyl radical cofactor of ribonucleotide reductase (RNR), probably by providing electrons for reduction during radical cofactor maturation in the catalytic small subunit. This chain is Anamorsin homolog, found in Drosophila erecta (Fruit fly).